Consider the following 334-residue polypeptide: Transcription initiation factor IIB (334 aa).

A TFIIB-type zinc finger spans residues 34-65 (EELVCPMCDSKNIIKDYEKAEIVCEDCGCVLQ). Zn(2+) contacts are provided by cysteine 38, cysteine 41, cysteine 57, and cysteine 60. 2 repeat units span residues 151–234 (SELD…SREL) and 245–326 (DYVP…ELTE).

It belongs to the TFIIB family.

Stabilizes TBP binding to an archaeal box-A promoter. Also responsible for recruiting RNA polymerase II to the pre-initiation complex (DNA-TBP-TFIIB). This is Transcription initiation factor IIB from Methanococcus aeolicus (strain ATCC BAA-1280 / DSM 17508 / OCM 812 / Nankai-3).